Consider the following 81-residue polypeptide: WAP four-disulfide core domain protein 13 (81 aa).

The N-terminal stretch at 1–22 is a signal peptide; the sequence is MRPVSPLQLLLVLSLAPQPVLG. The WAP domain occupies 31–74; that stretch reads YILEPPPCRSEPGACNMFCTQQEECPEPLQCCSAYCGIVCTSNQ. Disulfide bonds link Cys38–Cys62, Cys45–Cys66, Cys49–Cys61, and Cys55–Cys70.

It is found in the secreted. In terms of biological role, putative acid-stable proteinase inhibitor. The sequence is that of WAP four-disulfide core domain protein 13 (Wfdc13) from Mus musculus (Mouse).